Here is a 1173-residue protein sequence, read N- to C-terminus: Pleckstrin homology domain-containing family A member 6 (1173 aa).

Residues 1 to 22 (MSNKTGGKRSATINSDIANHNM) are compositionally biased toward polar residues. The disordered stretch occupies residues 1 to 39 (MSNKTGGKRSATINSDIANHNMVSEVPPERPNIRATRTS). Residues 59–158 (PVTKAGWLYK…WIQAMGEAAR (100 aa)) enclose the PH domain. Positions 163 to 346 (PAQKSVPQPV…PSRFYPMPRR (184 aa)) are disordered. The segment covering 201–233 (LEPEAKTRGEGDGRGCEKAERRPERPEVKKETL) has biased composition (basic and acidic residues). Phosphoserine is present on residues S247 and S251. Composition is skewed to polar residues over residues 270-281 (NGWQYSSPSRPG) and 311-322 (RKSSMNQLQQWV). Phosphoserine occurs at positions 314, 459, 461, and 472. Y492 carries the phosphotyrosine modification. A Phosphoserine modification is found at S665. 2 disordered regions span residues 737 to 872 (RKNN…PRDI) and 888 to 984 (ALNK…RPAY). 2 stretches are compositionally biased toward low complexity: residues 761–782 (SSNS…SPFS) and 789–799 (GSPTKPGSSEE). Residues 815 to 824 (ESPPTVPPLP) show a composition bias toward pro residues. At S864 the chain carries Phosphoserine. T868 carries the phosphothreonine modification. A Phosphoserine modification is found at S901. T908 carries the phosphothreonine modification. Residues 915–926 (RTTNGLTNGLSS) are compositionally biased toward polar residues. A Phosphoserine modification is found at S925. Basic and acidic residues predominate over residues 940–952 (GKVKMSVEEQMDR). Residues 953–967 (MRRHQSGSMKEKRRS) show a composition bias toward basic residues. A phosphoserine mark is found at S973, S979, and S992. At T1045 the chain carries Phosphothreonine. S1065 carries the phosphoserine modification. Disordered regions lie at residues 1093-1114 (PIGE…QEQE) and 1130-1173 (RGRM…TMRV). T1140 bears the Phosphothreonine mark. Positions 1141 to 1155 (PSPPTSPASPTPPVN) are enriched in pro residues. S1142 is subject to Phosphoserine. At T1145 the chain carries Phosphothreonine. A phosphoserine mark is found at S1146 and S1149. T1151 carries the phosphothreonine modification.

The polypeptide is Pleckstrin homology domain-containing family A member 6 (Plekha6) (Mus musculus (Mouse)).